A 34-amino-acid polypeptide reads, in one-letter code: QKELVPSKTTTCCGYSPGTMCPSCMCTNTCPPQK.

Gln-1 bears the Pyrrolidone carboxylic acid mark. At Glu-3 the chain carries 4-carboxyglutamate. O-linked (HexNAc...) serine glycosylation occurs at Ser-7. O-linked (HexNAc...) threonine glycosylation occurs at Thr-9. A 4-hydroxyproline mark is found at Pro-17, Pro-22, Pro-31, and Pro-32.

Belongs to the conotoxin A superfamily. In terms of processing, contains 3 disulfide bonds. Expressed by the venom duct.

The protein resides in the secreted. Probable neurotoxin with ion channel inhibitor activity. This Conus striatus (Striated cone) protein is Conotoxin S4.3.